Consider the following 127-residue polypeptide: MARIAGVDLPRNKYINIALTYIFGIGNSRAKAILAEANVEANRKVSDLNEEEVNRIRTAIENGSSVEGDLRKDVSMHIKRLIEIGSYRGYRHRRSLPVRGQRTHTNARTRKGPRKGTVANKKKATAK.

The segment at 93–127 (RRSLPVRGQRTHTNARTRKGPRKGTVANKKKATAK) is disordered.

Belongs to the universal ribosomal protein uS13 family. In terms of assembly, part of the 30S ribosomal subunit. Forms a loose heterodimer with protein S19. Forms two bridges to the 50S subunit in the 70S ribosome.

In terms of biological role, located at the top of the head of the 30S subunit, it contacts several helices of the 16S rRNA. In the 70S ribosome it contacts the 23S rRNA (bridge B1a) and protein L5 of the 50S subunit (bridge B1b), connecting the 2 subunits; these bridges are implicated in subunit movement. Contacts the tRNAs in the A and P-sites. This chain is Small ribosomal subunit protein uS13, found in Koribacter versatilis (strain Ellin345).